Here is a 128-residue protein sequence, read N- to C-terminus: Small ribosomal subunit protein uS12 (128 aa).

The segment at methionine 1–glutamate 25 is disordered. 3-methylthioaspartic acid is present on aspartate 89. Residues serine 101–lysine 128 are disordered.

This sequence belongs to the universal ribosomal protein uS12 family. In terms of assembly, part of the 30S ribosomal subunit. Contacts proteins S8 and S17. May interact with IF1 in the 30S initiation complex.

Its function is as follows. With S4 and S5 plays an important role in translational accuracy. Interacts with and stabilizes bases of the 16S rRNA that are involved in tRNA selection in the A site and with the mRNA backbone. Located at the interface of the 30S and 50S subunits, it traverses the body of the 30S subunit contacting proteins on the other side and probably holding the rRNA structure together. The combined cluster of proteins S8, S12 and S17 appears to hold together the shoulder and platform of the 30S subunit. The chain is Small ribosomal subunit protein uS12 from Chlorobium phaeobacteroides (strain BS1).